The primary structure comprises 412 residues: Phosphoglycerate kinase (412 aa).

Residues aspartate 24–asparagine 26, arginine 47, histidine 70–arginine 73, arginine 130, and arginine 167 contribute to the substrate site. ATP is bound by residues lysine 217, glycine 312, glutamate 343, and glycine 369–serine 372.

This sequence belongs to the phosphoglycerate kinase family. Monomer.

Its subcellular location is the cytoplasm. It catalyses the reaction (2R)-3-phosphoglycerate + ATP = (2R)-3-phospho-glyceroyl phosphate + ADP. The protein operates within carbohydrate degradation; glycolysis; pyruvate from D-glyceraldehyde 3-phosphate: step 2/5. The protein is Phosphoglycerate kinase of Kineococcus radiotolerans (strain ATCC BAA-149 / DSM 14245 / SRS30216).